The chain runs to 378 residues: Putative zinc finger protein C09F5.3 (378 aa).

Basic residues predominate over residues 1-14 (MRKTEKMKRPHNSS). Disordered regions lie at residues 1-36 (MRKT…SKSI) and 61-80 (TLSE…NSAP). Basic and acidic residues-rich tracts occupy residues 16–26 (VKQEERADDSH) and 62–71 (LSEHVPEKKP). The C2H2-type 1 zinc-finger motif lies at 42–65 (LKCELCSTVCSSISQLQSHTLSEH). Residues 85-107 (VACQQCEDTFEDFAQFAIHMKSH) form a C2H2-type 2; degenerate zinc finger. Residues 204–226 (YGCALCATSYPSQLHLITHVQMS) form a C2H2-type 3; degenerate zinc finger. The segment at 231–250 (TFYPPSLPIPTPPSPKSTPK) is disordered. The span at 235-246 (PSLPIPTPPSPK) shows a compositional bias: pro residues. 4 consecutive C2H2-type zinc fingers follow at residues 254–277 (LQCS…LRKH), 284–306 (DKCA…CLRH), 312–334 (HHCP…CAYH), and 355–377 (FVCP…TKIH).

The protein resides in the nucleus. This Caenorhabditis elegans protein is Putative zinc finger protein C09F5.3.